Consider the following 113-residue polypeptide: U11-theraphotoxin-Hhn1a (113 aa).

The signal sequence occupies residues 1 to 21 (MNTVRVTFLLVFVLAVSLGQA). Residues 22-74 (DKDENRMEMQEKTEQGKSYLDFAENLLLQKLEELEAKLPEEDSEESRNSRQKR) constitute a propeptide that is removed on maturation. Over residues 58–69 (KLPEEDSEESRN) the composition is skewed to basic and acidic residues. Residues 58–82 (KLPEEDSEESRNSRQKRCIGEGVPC) are disordered. 3 cysteine pairs are disulfide-bonded: Cys75/Cys90, Cys82/Cys95, and Cys89/Cys110.

It belongs to the neurotoxin 14 (magi-1) family. 01 (HNTX-16) subfamily. In terms of tissue distribution, expressed by the venom gland.

Its subcellular location is the secreted. In terms of biological role, probable ion channel inhibitor. The sequence is that of U11-theraphotoxin-Hhn1a from Cyriopagopus hainanus (Chinese bird spider).